A 487-amino-acid chain; its full sequence is MKAQPKASHFIGGAFVEDKAGKPLPVIYPATDEEIASLYSATPGIIEAAYAAALKAQGEWAALKPVERGRILRRTAEILREKNRKLSKLETLDTGKALQETLVADAASAADALEFFGGIISGFNGEFVELGGSFAYTRREALGICVGIGAWNYPIQIAAWKSAPALAMGNAFIFKPSENTPLSALALAEAYKEAGLPDGLFNVVQGYGDVGAALVNHRLTAKVSLTGSVPTGRRIMAQAGEQLKHVTMELGGKSPLIVFDDADLESAIGGAMLGNFYSTGQVCSNGTRVFVHKNIRERFIERLVERTRKIRIGDPFDEATQMGPLISAAQRDKVLSYIKKGKAEGATLACGGGVPKLQGFDKGFFIEPTVFADVTDTMTIAREEIFGPVMSVLEFSDEDEVIARANDSEFGLAAGVFTADLSRGHHVIGQIKAGTCWINAYNLTPVEVPFGGYKQSGIGRENGIAALAHYSQIKTVYVEMGKVDSPY.

Ile27 and Asp93 together coordinate K(+). Position 149 to 151 (149 to 151) interacts with NAD(+); the sequence is GAW. Residue Lys161 is the Charge relay system of the active site. NAD(+) is bound by residues 175–178 and 228–231; these read KPSE and SVPT. Leu243 is a binding site for K(+). Residue Glu249 is the Proton acceptor of the active site. NAD(+) is bound by residues Gly251, Cys283, and Glu384. The Nucleophile role is filled by Cys283. Cys283 carries the cysteine sulfenic acid (-SOH) modification. 2 residues coordinate K(+): Lys454 and Gly457. Residue Glu461 is the Charge relay system of the active site.

The protein belongs to the aldehyde dehydrogenase family. In terms of assembly, dimer of dimers. K(+) is required as a cofactor.

The catalysed reaction is betaine aldehyde + NAD(+) + H2O = glycine betaine + NADH + 2 H(+). It functions in the pathway amine and polyamine biosynthesis; betaine biosynthesis via choline pathway; betaine from betaine aldehyde: step 1/1. In terms of biological role, involved in the biosynthesis of the osmoprotectant glycine betaine. Catalyzes the irreversible oxidation of betaine aldehyde to the corresponding acid. The polypeptide is Betaine aldehyde dehydrogenase (Brucella canis (strain ATCC 23365 / NCTC 10854 / RM-666)).